The sequence spans 626 residues: Glyco-Gag protein (626 aa).

The Cytoplasmic portion of the chain corresponds to 1-66; that stretch reads LGDVPGTSGA…SVWNRSRAAR (66 aa). Residues 67–86 form a helical membrane-spanning segment; that stretch reads LVCCSIVLCCLCLTVFLYLS. Topologically, residues 87-626 are extracellular; it reads ENMGQAVTTP…PQASLLTLDD (540 aa). Asn-113 carries N-linked (GlcNAc...) asparagine; by host glycosylation. Pro residues-rich tracts occupy residues 198–212 and 249–261; these read PPSA…PLST and DPPP…PPSP. Disordered regions lie at residues 198 to 306 and 522 to 626; these read PPSA…FPLR and RETP…TLDD. Basic and acidic residues-rich tracts occupy residues 522 to 554 and 574 to 607; these read RETP…EKER and RQDR…DCPK. Residues 526-566 are a coiled coil; that stretch reads EEREERIRRETEEKEERRRAEDVQREKERDRRRHREMSKLL. A CCHC-type zinc finger spans residues 590–607; sequence DQCAYCKEKGHWARDCPK.

In terms of processing, glycosylated by host. Post-translationally, cleaved by host near the middle of the molecule, releasing the c-terminal half containing capsid and nucleoprotein domains op GAG.

It localises to the host cell membrane. Plays a role in viral particle release. Presumably acts by facilitating the fission of the virion bud at the cell surface. May prevent the antiviral activity of murine APOBEC3. This chain is Glyco-Gag protein, found in Mus musculus (Mouse).